We begin with the raw amino-acid sequence, 395 residues long: Acetate kinase 2 (395 aa).

Asn8 is a Mg(2+) binding site. Position 15 (Lys15) interacts with ATP. Residue Arg89 participates in substrate binding. Catalysis depends on Asp146, which acts as the Proton donor/acceptor. Residues 206–210 (HIGNG), 283–285 (DMR), and 331–335 (GVGEN) each bind ATP. A Mg(2+)-binding site is contributed by Glu383.

This sequence belongs to the acetokinase family. As to quaternary structure, homodimer. Mg(2+) serves as cofactor. Mn(2+) is required as a cofactor.

Its subcellular location is the cytoplasm. It carries out the reaction acetate + ATP = acetyl phosphate + ADP. Its pathway is metabolic intermediate biosynthesis; acetyl-CoA biosynthesis; acetyl-CoA from acetate: step 1/2. Its function is as follows. Catalyzes the formation of acetyl phosphate from acetate and ATP. Can also catalyze the reverse reaction. The chain is Acetate kinase 2 from Lactococcus lactis subsp. lactis (strain IL1403) (Streptococcus lactis).